The following is a 108-amino-acid chain: UPF0060 membrane protein YnfA (108 aa).

At 1-5 (MIKTT) the chain is on the periplasmic side. A helical membrane pass occupies residues 6-26 (LLFFATALCEIIGCFLPWLWL). The Cytoplasmic segment spans residues 27 to 30 (KRNA). Residues 31–51 (SIWLLLPAGISLALFVWLLTL) traverse the membrane as a helical segment. Over 52 to 60 (HPAASGRVY) the chain is Periplasmic. Residues 61 to 81 (AAYGGVYVCTALIWLRVVDGV) form a helical membrane-spanning segment. Residues 82–84 (KLT) are Cytoplasmic-facing. A helical transmembrane segment spans residues 85–105 (LYDWTGALIALCGMLIIVAGW). The Periplasmic segment spans residues 106-108 (GRT).

The protein belongs to the UPF0060 family.

The protein resides in the cell inner membrane. In Escherichia coli O127:H6 (strain E2348/69 / EPEC), this protein is UPF0060 membrane protein YnfA.